A 631-amino-acid polypeptide reads, in one-letter code: 1-deoxy-D-xylulose-5-phosphate synthase (631 aa).

Thiamine diphosphate-binding positions include His87 and 128–130 (GHS). Mg(2+) is bound at residue Asp159. Residues 160–161 (GA), Asn188, Phe295, and Glu377 each bind thiamine diphosphate. Position 188 (Asn188) interacts with Mg(2+).

Belongs to the transketolase family. DXPS subfamily. In terms of assembly, homodimer. It depends on Mg(2+) as a cofactor. The cofactor is thiamine diphosphate.

The enzyme catalyses D-glyceraldehyde 3-phosphate + pyruvate + H(+) = 1-deoxy-D-xylulose 5-phosphate + CO2. It participates in metabolic intermediate biosynthesis; 1-deoxy-D-xylulose 5-phosphate biosynthesis; 1-deoxy-D-xylulose 5-phosphate from D-glyceraldehyde 3-phosphate and pyruvate: step 1/1. Catalyzes the acyloin condensation reaction between C atoms 2 and 3 of pyruvate and glyceraldehyde 3-phosphate to yield 1-deoxy-D-xylulose-5-phosphate (DXP). The chain is 1-deoxy-D-xylulose-5-phosphate synthase from Pseudomonas putida (strain ATCC 47054 / DSM 6125 / CFBP 8728 / NCIMB 11950 / KT2440).